A 286-amino-acid polypeptide reads, in one-letter code: Acyl-CoA-binding domain-containing protein 6 (286 aa).

Residues 1–24 (MASPGVLEESSSGEACSGGCPEQW) form a disordered region. A compositionally biased stretch (low complexity) spans 8–22 (EESSSGEACSGGCPE). In terms of domain architecture, ACB spans 32–117 (LQGQFEQAAK…VKKLDPDWSP (86 aa)). Residues 59-63 (YARYK), Lys-85, and Tyr-104 contribute to the an acyl-CoA site. ANK repeat units lie at residues 182–211 (EGRC…HINM) and 215–244 (EGQT…DPSL).

The protein resides in the cytoplasm. It localises to the nucleus. Binds long-chain acyl-coenzyme A molecules with a strong preference for unsaturated C18:1-CoA. Does not bind fatty acids. Plays a role in protein N-myristoylation. This chain is Acyl-CoA-binding domain-containing protein 6 (acbd6), found in Xenopus tropicalis (Western clawed frog).